Here is a 539-residue protein sequence, read N- to C-terminus: Glucose-6-phosphate isomerase (539 aa).

E340 serves as the catalytic Proton donor. Catalysis depends on residues H371 and K500.

It belongs to the GPI family.

The protein localises to the cytoplasm. It catalyses the reaction alpha-D-glucose 6-phosphate = beta-D-fructose 6-phosphate. Its pathway is carbohydrate biosynthesis; gluconeogenesis. The protein operates within carbohydrate degradation; glycolysis; D-glyceraldehyde 3-phosphate and glycerone phosphate from D-glucose: step 2/4. Its function is as follows. Catalyzes the reversible isomerization of glucose-6-phosphate to fructose-6-phosphate. This Ruegeria pomeroyi (strain ATCC 700808 / DSM 15171 / DSS-3) (Silicibacter pomeroyi) protein is Glucose-6-phosphate isomerase.